A 243-amino-acid polypeptide reads, in one-letter code: Sugar fermentation stimulation protein homolog (243 aa).

The protein belongs to the SfsA family.

In Lacticaseibacillus casei (strain BL23) (Lactobacillus casei), this protein is Sugar fermentation stimulation protein homolog.